The following is an 87-amino-acid chain: Large ribosomal subunit protein bL27 (87 aa).

Positions 1 to 20 (MAHKKAGGSSRNGRDSESKR) are disordered.

The protein belongs to the bacterial ribosomal protein bL27 family.

In Thiobacillus denitrificans (strain ATCC 25259 / T1), this protein is Large ribosomal subunit protein bL27.